The primary structure comprises 630 residues: Protein mono-ADP-ribosyltransferase PARP6 (630 aa).

An ADP-ribosylcysteine modification is found at C237. A PARP catalytic domain is found at 394–620 (EMTQGSYLEI…QDPKIQKEIM (227 aa)). At D600 the chain carries ADP-ribosyl aspartic acid.

This sequence belongs to the ARTD/PARP family. Auto-mono-ADP-ribosylated.

The enzyme catalyses L-aspartyl-[protein] + NAD(+) = 4-O-(ADP-D-ribosyl)-L-aspartyl-[protein] + nicotinamide. It catalyses the reaction L-cysteinyl-[protein] + NAD(+) = S-(ADP-D-ribosyl)-L-cysteinyl-[protein] + nicotinamide + H(+). Mono-ADP-ribosyltransferase that mediates mono-ADP-ribosylation of target proteins. This chain is Protein mono-ADP-ribosyltransferase PARP6, found in Homo sapiens (Human).